Consider the following 192-residue polypeptide: Ethylene-responsive transcription factor ERF027 (192 aa).

The AP2/ERF DNA-binding region spans 18–74 (VYRGIRCRSGKWVSEIREPRKTTRIWLGTYPMAEMAAAAYDVAAMALKGREAVLNFP). Disordered regions lie at residues 104–132 (CEEG…HVDN) and 167–192 (APPS…LWGY). Positions 179 to 192 (DSPENSNDEDLWGY) are enriched in acidic residues.

It belongs to the AP2/ERF transcription factor family. ERF subfamily.

It is found in the nucleus. Functionally, probably acts as a transcriptional activator. Binds to the GCC-box pathogenesis-related promoter element. May be involved in the regulation of gene expression by stress factors and by components of stress signal transduction pathways. The chain is Ethylene-responsive transcription factor ERF027 (ERF027) from Arabidopsis thaliana (Mouse-ear cress).